A 247-amino-acid chain; its full sequence is C-X-C motif chemokine 16 (247 aa).

Positions 1-26 (MRRGFGPLALTLFLFFFALLTLPGDG) are cleaved as a signal peptide. Over 27–198 (NQGSVAGSCY…EPGAGAGTQA (172 aa)) the chain is Extracellular. Disulfide bonds link cysteine 35–cysteine 65 and cysteine 37–cysteine 79. The segment at 120–152 (IPEATEGKPPDTSTAVQFQSTQQSTFPSGAPSL) is disordered. The span at 131 to 147 (TSTAVQFQSTQQSTFPS) shows a compositional bias: low complexity. The chain crosses the membrane as a helical span at residues 199–219 (LVPVLSLLAIVFFLVAAMVCV). The Cytoplasmic segment spans residues 220 to 247 (LCNRRVTRQSSSGLQLCYTPVEPRPQGL).

It belongs to the intercrine alpha (chemokine CxC) family. Glycosylated.

It localises to the membrane. In terms of biological role, induces a strong chemotactic response. Induces calcium mobilization. Binds to CXCR6/Bonzo. Also acts as a scavenger receptor on macrophages, which specifically binds to OxLDL (oxidized low density lipoprotein), suggesting that it may be involved in pathophysiology such as atherogenesis. In Rattus norvegicus (Rat), this protein is C-X-C motif chemokine 16 (Cxcl16).